The primary structure comprises 2500 residues: Non-reducing polyketide synthase atr1 (2500 aa).

An N-terminal acylcarrier protein transacylase domain (SAT) region spans residues 13–260 (VFSPQSKAPK…HNPENANLAL (248 aa)). The Ketosynthase family 3 (KS3) domain occupies 385-808 (TDAVAVVGMA…GSNSAVLLCQ (424 aa)). Catalysis depends on for beta-ketoacyl synthase activity residues cysteine 557, histidine 692, and histidine 731. The malonyl-CoA:ACP transacylase (MAT) domain stretch occupies residues 908–1199 (MTFSGQSRQS…EFPERHTFLD (292 aa)). The For acyl/malonyl transferase activity role is filled by serine 995. Residues 1286 to 1413 (PRLVEPRTKP…GDFGFTTQTQ (128 aa)) form an N-terminal hotdog fold region. Residues 1286-1584 (PRLVEPRTKP…FTKLPITRLE (299 aa)) form the PKS/mFAS DH domain. A product template (PT) domain region spans residues 1287–1583 (RLVEPRTKPS…QFTKLPITRL (297 aa)). Residue histidine 1317 is the Proton acceptor; for dehydratase activity of the active site. A C-terminal hotdog fold region spans residues 1433-1584 (SETLKSKRAY…FTKLPITRLE (152 aa)). Residue aspartate 1495 is the Proton donor; for dehydratase activity of the active site. The tract at residues 1594 to 1649 (AHNTPILKSSQQDSIVSASSSSSTEHSDDDSEDDGSRSPSHSDTSVDSESEAPADN) is disordered. Positions 1602–1617 (SSQQDSIVSASSSSST) are enriched in low complexity. Positions 1649–1725 (NGAAKKLKSL…RIVAPEMAAK (77 aa)) constitute a Carrier domain. At serine 1683 the chain carries O-(pantetheine 4'-phosphoryl)serine. A thioesterase (TE) domain region spans residues 2164–2496 (KSYRIETMPY…YEFIFDVVGR (333 aa)). Active-site for thioesterase activity residues include serine 2285 and aspartate 2434.

The enzyme catalyses 6 malonyl-CoA + 2 acetyl-CoA + 2 S-adenosyl-L-methionine + 3 H(+) = 4-O-demethylbarbatate + 2 S-adenosyl-L-homocysteine + 6 CO2 + 8 CoA + H2O. It participates in secondary metabolite biosynthesis; terpenoid biosynthesis. Functionally, non-reducing polyketide synthase; part of the gene cluster that mediates the biosynthesis of atranorin, a depside of polyketide origin that accumulates in the cortical or medullary layers of lichen thalli. The first step in the pathway is performed by the non-reducing polyketide synthase atr1 that produces 4-O-demethylbarbatic acid composed of two 3-methylorsellinic acid (3MOA) moieties from S-adenosyl-L-methionine (SAM), acetyl-CoA and malonyl-CoA units. The pathway continues with the actions of the cytochrome P450 monooygenase atr2 that catalizes the oxidation of c-9 and the O-methyltransferase atr3 that performs the methylation of the carboxyl group to yield atranorin, via the proatranorin II and III intermediates if atr2 acts first, or the proatranorin I intermediate if atr3 acts first. This Stereocaulon alpinum (Alpine snow lichen) protein is Non-reducing polyketide synthase atr1.